The sequence spans 302 residues: Phosphatidylglycerol--prolipoprotein diacylglyceryl transferase (302 aa).

Helical transmembrane passes span 19–39, 67–87, 108–128, 143–163, 203–223, 232–252, and 264–284; these read FGPL…LLGW, LVLW…FVFY, IWEG…AIIL, LIAP…FING, QLYE…FAIY, GALV…LENV, and LGLT…GWLL. R156 serves as a coordination point for a 1,2-diacyl-sn-glycero-3-phospho-(1'-sn-glycerol).

It belongs to the Lgt family.

The protein resides in the cell inner membrane. The enzyme catalyses L-cysteinyl-[prolipoprotein] + a 1,2-diacyl-sn-glycero-3-phospho-(1'-sn-glycerol) = an S-1,2-diacyl-sn-glyceryl-L-cysteinyl-[prolipoprotein] + sn-glycerol 1-phosphate + H(+). It functions in the pathway protein modification; lipoprotein biosynthesis (diacylglyceryl transfer). Functionally, catalyzes the transfer of the diacylglyceryl group from phosphatidylglycerol to the sulfhydryl group of the N-terminal cysteine of a prolipoprotein, the first step in the formation of mature lipoproteins. This chain is Phosphatidylglycerol--prolipoprotein diacylglyceryl transferase, found in Caulobacter vibrioides (strain ATCC 19089 / CIP 103742 / CB 15) (Caulobacter crescentus).